Reading from the N-terminus, the 275-residue chain is NH(3)-dependent NAD(+) synthetase (275 aa).

46–53 is an ATP binding site; that stretch reads GISGGQDS. Position 52 (D52) interacts with Mg(2+). R140 lines the deamido-NAD(+) pocket. T160 lines the ATP pocket. A Mg(2+)-binding site is contributed by E165. Residues K173 and D180 each contribute to the deamido-NAD(+) site. K189 and T211 together coordinate ATP. 260–261 lines the deamido-NAD(+) pocket; the sequence is HK.

The protein belongs to the NAD synthetase family. Homodimer.

It catalyses the reaction deamido-NAD(+) + NH4(+) + ATP = AMP + diphosphate + NAD(+) + H(+). Its pathway is cofactor biosynthesis; NAD(+) biosynthesis; NAD(+) from deamido-NAD(+) (ammonia route): step 1/1. Its function is as follows. Catalyzes the ATP-dependent amidation of deamido-NAD to form NAD. Uses ammonia as a nitrogen source. In Salmonella arizonae (strain ATCC BAA-731 / CDC346-86 / RSK2980), this protein is NH(3)-dependent NAD(+) synthetase.